A 769-amino-acid chain; its full sequence is CO(2)-response secreted protease (769 aa).

The first 27 residues, 1 to 27, serve as a signal peptide directing secretion; it reads MKGITFFTPFLSFLYLLCILFMTETEA. Residues 35-108 form the Inhibitor I9 domain; it reads VYIVYMGSAS…VFPDPHFQLH (74 aa). Residues 112 to 613 form the Peptidase S8 domain; it reads SWDFLKYQTS…AGELSSTASM (502 aa). Residues D145 and H210 each act as charge relay system in the active site. One can recognise a PA domain in the interval 381–465; it reads ADASEGSARA…SKEAAEIFSY (85 aa). S546 acts as the Charge relay system in catalysis.

This sequence belongs to the peptidase S8 family. In terms of tissue distribution, expressed in roots, guard cells and meristemoid and pavement cells.

It is found in the secreted. It localises to the cell wall. The catalysed reaction is Release of an N-terminal tripeptide from a polypeptide.. Its function is as follows. Mediates CO(2)-controlled stomatal development by cleaving peptide EPF2 (AC Q8LC53). Not active on peptides EPF1 (AC Q8S8I4) or stomagen (AC Q9SV72). In Arabidopsis thaliana (Mouse-ear cress), this protein is CO(2)-response secreted protease.